A 226-amino-acid polypeptide reads, in one-letter code: Phosphate propanoyltransferase (226 aa).

44-46 (VSN) provides a ligand contact to CoA. Residues histidine 48 and histidine 50 each contribute to the Zn(2+) site. Methionine 72, lysine 90, and arginine 97 together coordinate CoA. Arginine 103 is a phosphate binding site. Position 109 (glutamate 109) interacts with Zn(2+). Residue phenylalanine 116 coordinates CoA. Zn(2+) is bound by residues histidine 157, histidine 159, and histidine 204. Asparagine 211 serves as a coordination point for CoA.

Belongs to the PduL family. As to quaternary structure, full-length protein forms large oligomers. Homodimer, when purified in the absence of the encapsulation peptide (EP, residues 1-47). The EP may influence oligomerization. The cofactor is Zn(2+).

It localises to the bacterial microcompartment. The enzyme catalyses propanoyl-CoA + phosphate = propanoyl phosphate + CoA. It participates in polyol metabolism; 1,2-propanediol degradation. Functionally, involved in 1,2-propanediol (1,2-PD) utilization within the bacterial microcompartment (BMC) dedicated to 1,2-PD degradation by catalyzing the conversion of propanoyl-CoA to propanoyl-phosphate. CoA is regenerated within the pdu BMC (for use by PduP) via this enzyme, although there must also be cofactor transport across the BMC. Directly targeted to the BMC. Phosphate is probably the first substrate to bind in the forward direction. CoA is probably the first substrate to bind in the reverse direction, and might bind to the enzyme as the BMC assembles, ensuring cofactor encapsulation. The sequence is that of Phosphate propanoyltransferase from Rhodopseudomonas palustris (strain BisB18).